A 408-amino-acid chain; its full sequence is Aminopeptidase T (408 aa).

A divalent metal cation-binding residues include Glu250, Glu316, Glu340, His345, His376, and Asp378.

It belongs to the peptidase M29 family. Homodimer. It depends on Co(2+) as a cofactor. Zn(2+) is required as a cofactor. Mg(2+) serves as cofactor.

In terms of biological role, metal-dependent exopeptidase. This is Aminopeptidase T from Thermus thermophilus (strain ATCC 27634 / DSM 579 / HB8).